Consider the following 748-residue polypeptide: Antigen peptide transporter 1 (748 aa).

At 1-15 (MASSRCPAPRGCRCL) the chain is on the cytoplasmic side. Residues 16-36 (PGASLAWLGTVLLFLADWVLL) traverse the membrane as a helical segment. The Lumenal portion of the chain corresponds to 37–53 (RTALPRIFSLLVPTALP). The chain crosses the membrane as a helical span at residues 54–76 (LLRVWAVGLSRWAVLWLGACGVL). Topologically, residues 77–92 (RATVGSKSENAGAQGW) are cytoplasmic. A helical membrane pass occupies residues 93 to 113 (LAALEPLAAALGLALPGLALF). Over 114–133 (RELISWGAPGSADSTRLLHW) the chain is Lumenal. Residues 134–154 (GSHPSAFVVSYAAALPAAALW) form a helical membrane-spanning segment. Topologically, residues 155–186 (HKLGSLWVPGGQGGSGNPVRRLLGCLGSETRR) are cytoplasmic. Residues 187 to 207 (LSLFLVLVVLSSLGEMAIPFF) traverse the membrane as a helical segment. The ABC transmembrane type-1 domain maps to 187–470 (LSLFLVLVVL…LLSIYPRVQK (284 aa)). Topologically, residues 208–227 (TGRLTDWILQDGSADTFTRN) are lumenal. Residues 228-248 (LTLMSILTIASAVLEFVGDGI) form a helical membrane-spanning segment. Topologically, residues 249–298 (YNNTMGHVHSHLQGEVFGAVLRQETEFFQQNQTGNITSRVTEDTSTLSDS) are cytoplasmic. A helical transmembrane segment spans residues 299–319 (LSENLSLFLWYLVRGLCLLGI). The Lumenal portion of the chain corresponds to 320–328 (MLWGSVSLT). The chain crosses the membrane as a helical span at residues 329 to 349 (MVTLVTLPLLFLLPKKVGKWY). At 350-418 (QLLEVQVRES…AVNSWTTSIS (69 aa)) the chain is on the cytoplasmic side. Residues 375-420 (PTVRSFANEEGEAQKFREKLQEIKTLNQKEAVAYAVNSWTTSISGM) are part of the peptide-binding site. Residues 419-439 (GMLLKVGILYIGGQLVTSGAV) traverse the membrane as a helical segment. Residues 440–443 (SSGN) lie on the Lumenal side of the membrane. A helical transmembrane segment spans residues 444–464 (LVTFVLYQMQFTQAVEVLLSI). The part of the peptide-binding site stretch occupies residues 453–487 (QFTQAVEVLLSIYPRVQKAVGSSEKIFEYLDRTPR). Topologically, residues 465 to 748 (YPRVQKAVGS…MVQAPADAPE (284 aa)) are cytoplasmic. Positions 503 to 742 (VQFQDVSFAY…KGCYWAMVQA (240 aa)) constitute an ABC transporter domain. ATP-binding positions include 538–546 (GPNGSGKST), 641–647 (SQLSGGQ), and Gln-701. Mg(2+) is bound at residue Ser-545.

It belongs to the ABC transporter superfamily. ABCB family. MHC peptide exporter (TC 3.A.1.209) subfamily. In terms of assembly, heterodimer of TAP1 and TAP2 (TAP1-TAP2). A component of the peptide loading complex (PLC), interacts via TAPBP with MHCI heterodimer; this interaction mediates peptide-MHCI assembly. Interacts with PSMB5 and PSMB8. Mg(2+) is required as a cofactor.

The protein localises to the endoplasmic reticulum membrane. It carries out the reaction a peptide antigen(in) + ATP + H2O = a peptide antigen(out) + ADP + phosphate + H(+). Functionally, ABC transporter associated with antigen processing. In complex with TAP2 mediates unidirectional translocation of peptide antigens from cytosol to endoplasmic reticulum (ER) for loading onto MHC class I (MHCI) molecules. Uses the chemical energy of ATP to export peptides against the concentration gradient. During the transport cycle alternates between 'inward-facing' state with peptide binding site facing the cytosol to 'outward-facing' state with peptide binding site facing the ER lumen. Peptide antigen binding to ATP-loaded TAP1-TAP2 induces a switch to hydrolysis-competent 'outward-facing' conformation ready for peptide loading onto nascent MHCI molecules. Subsequently ATP hydrolysis resets the transporter to the 'inward facing' state for a new cycle. As a component of the peptide loading complex (PLC), acts as a molecular scaffold essential for peptide-MHCI assembly and antigen presentation. The sequence is that of Antigen peptide transporter 1 (TAP1) from Gorilla gorilla gorilla (Western lowland gorilla).